The following is a 601-amino-acid chain: Elongation factor 4 (601 aa).

The tr-type G domain maps to Ser7–Lys189. GTP is bound by residues Asp19 to Thr24 and Asn136 to Asp139.

The protein belongs to the TRAFAC class translation factor GTPase superfamily. Classic translation factor GTPase family. LepA subfamily.

The protein localises to the cell inner membrane. The enzyme catalyses GTP + H2O = GDP + phosphate + H(+). Its function is as follows. Required for accurate and efficient protein synthesis under certain stress conditions. May act as a fidelity factor of the translation reaction, by catalyzing a one-codon backward translocation of tRNAs on improperly translocated ribosomes. Back-translocation proceeds from a post-translocation (POST) complex to a pre-translocation (PRE) complex, thus giving elongation factor G a second chance to translocate the tRNAs correctly. Binds to ribosomes in a GTP-dependent manner. The chain is Elongation factor 4 from Afipia carboxidovorans (strain ATCC 49405 / DSM 1227 / KCTC 32145 / OM5) (Oligotropha carboxidovorans).